The primary structure comprises 269 residues: Senescence-associated protein 13 (269 aa).

21–45 (LVTGGSKGIGEAVVEELAMLGAKVH) provides a ligand contact to NADP(+). Position 154 (Ser-154) interacts with substrate. The Proton acceptor role is filled by Tyr-167.

The protein belongs to the short-chain dehydrogenases/reductases (SDR) family. SDR65C subfamily.

In terms of biological role, unspecific reductase providing both diastereomeric alcohols from the prochiral ketones. Active on cyclic monoterpenes and small flexible lipophilic carbonyls. No activity with tropinone, nitrogen-containing tropinone analogs, tropine or pseudotropine as substrate. This chain is Senescence-associated protein 13, found in Arabidopsis thaliana (Mouse-ear cress).